The following is a 509-amino-acid chain: MPRHCCCFVFHFLLYMLLINIVKNNIITAFSHRHQALRERKNIFSNSPINYIYYLGANKHIYSKFSSVCEQKKLAHKKIAIKKWGIERNEKKKFTISLNNYNKIQQSKFMSKMVKENKASTKNENKCSINNTQDIRNFMNLKKEEKDEECDEKTKQDNNKENIKNETIVQKKKIDKNNKTKEKIKTKSETNKNTNITYPSIPKSIEKRWADYKKIIEYAKSTNVYLGAHISASGGVQNAPINSFNVSGLAFALFLKNQRKWESPPLTEENIKQFNENCKKYNFDKNLILPHGSYLINLANPDKEKREKSYLSFVDDIKRCEQLNIKLYNFHPGSTVGMCSTEQGIKNISDCINRAHKETSNVIIVLENSAGQKNSIGSKFEHLRDIISQIDDKERIGVCLDTCHTFAAGYDIKSYEKFEEVMNNFHNIVDSKYLKAVHLNDSKSDLGSGLDRHENIGKGKLTLDTFKYIMTSKYFKNIPIVLETPDITNDESVYKYEIEYLYKMCAKEQ.

Positions 1 to 24 (MPRHCCCFVFHFLLYMLLINIVKN) are cleaved as a signal peptide. The disordered stretch occupies residues 144-188 (EEKDEECDEKTKQDNNKENIKNETIVQKKKIDKNNKTKEKIKTKS). Composition is skewed to basic and acidic residues over residues 152 to 164 (EKTK…ENIK) and 175 to 188 (DKNN…KTKS). The Zn(2+) site is built by histidine 291, histidine 331, glutamate 367, aspartate 401, histidine 404, histidine 438, aspartate 451, histidine 453, and glutamate 483. Histidine 404 contributes to the Mn(2+) binding site. Mn(2+) is bound by residues aspartate 451 and histidine 453.

It belongs to the AP endonuclease 2 family. Zn(2+) is required as a cofactor. The cofactor is Mn(2+). Post-translationally, may be proteolytically cleaved.

It localises to the mitochondrion. In terms of biological role, plays a role in mitochondrial DNA base excision repair (BER) pathway induced by oxidative stress. Has apurinic/apyrimidinic (AP) endonuclease activity towards double-stranded DNA (dsDNA) with a preference for C as opposite base. Has 3'-phosphatase activity; removes 3'-phosphate from blunt-end, recessed, and gapped DNA templates and thus, removes 3'-blocks for DNA polymerase activity during BER. Lacks 3'-5' exonuclease activity and does not cleave damaged bases by nucleotide incision repair (NIR). The polypeptide is Apurinic-apyrimidinic endonuclease 1 (Plasmodium berghei (strain Anka)).